The following is a 275-amino-acid chain: Large ribosomal subunit protein uL2c (275 aa).

The tract at residues V223–L255 is disordered.

The protein belongs to the universal ribosomal protein uL2 family. As to quaternary structure, part of the 50S ribosomal subunit.

It is found in the plastid. The protein resides in the chloroplast. The polypeptide is Large ribosomal subunit protein uL2c (rpl2) (Pleurastrum terricola (Filamentous green alga)).